The following is a 519-amino-acid chain: MEVLQASSLSFQLLRRHSRNNLINKFRNPSLPRIHMPRQNIDLKTFAAITPTVACPPSEPEIIPEKKEDKFEWYENWYPVASVCDLDKRRPHGRKVIGIDVVVWWDRKENAWKVFDDTCPHRLAPLSEGRIDQWGRLQCVYHGWCFDGAGACKFIPQAPHHGPPVETSKKACVKGVYPSCVRNGIVWFWPNSDPKYKDIFLTKKPHYIPELDDPSFTCTMTTREVPYGYEILAENLMDPSHVPYAHYGILELEKVKESAKRDREGGHELEIRVGKIDVNGFSAKQVSADYYFVPPYLYYGRITPNTATKAIDVTLPVVPEEKTAMIIFYCIPVRPGYSRLIFAGARNFAVQVDRFVPRWITHMSHNLIFDSDLFLLHVEERKLKDLDWHKSCYIPTKADGQVVAFRRWLNKYGGTQVDWRNNFTPALPPTPSREQLFDRYWSHTAECSSCSVACKRLNALEIGLQAMSLVFVAMAAAVSAPATRYSMVAMAVLSFLASKWLSRFIHKTFYNHGYDHAFI.

The N-terminal 46 residues, 1–46 (MEVLQASSLSFQLLRRHSRNNLINKFRNPSLPRIHMPRQNIDLKTF), are a transit peptide targeting the chloroplast. The Rieske domain maps to 77–188 (WYPVASVCDL…SCVRNGIVWF (112 aa)). Positions 119, 121, 139, and 142 each coordinate [2Fe-2S] cluster. Fe cation contacts are provided by H241 and H246. Residues 447-450 (CSSC) carry the Redox-active motif motif. 2 consecutive transmembrane segments (helical) span residues 462 to 478 (IGLQAMSLVFVAMAAAV) and 485 to 501 (YSMVAMAVLSFLASKWL).

It depends on [2Fe-2S] cluster as a cofactor. As to expression, glandular trichome-specific expression in leaves.

The protein resides in the plastid. The protein localises to the chloroplast membrane. It is found in the cytoplasm. It catalyses the reaction salvigenin + 2 reduced [2Fe-2S]-[ferredoxin] + O2 + 2 H(+) = 8-hydroxysalvigenin + 2 oxidized [2Fe-2S]-[ferredoxin] + H2O. Its pathway is flavonoid metabolism. Its function is as follows. Rieske-type, PAO-family oxygenase involved in the biosynthesis of polymethoxylated flavonoids natural products such as nevadensin and salvigenin, aroma compounds which contribute to the flavor of sweet basil, and exhibit pharmacological activities such as anti-allergic, anti-oxidant, antibacterial, anti-proliferative, and anti-inflammatory effects. Catalyzes the hydroxylation of salvigenin to produce 8-hydroxysalvigenin (8-OH-SALV). The polypeptide is Flavonoid 8-hydroxylase 2, chloroplastic (Ocimum basilicum (Sweet basil)).